A 400-amino-acid chain; its full sequence is Probable tRNA sulfurtransferase (400 aa).

The region spanning Glu-60–Thr-164 is the THUMP domain. Residues Leu-182–Leu-183, His-207–Phe-208, Arg-264, Gly-286, and Gln-295 each bind ATP.

The protein belongs to the ThiI family.

Its subcellular location is the cytoplasm. It catalyses the reaction [ThiI sulfur-carrier protein]-S-sulfanyl-L-cysteine + a uridine in tRNA + 2 reduced [2Fe-2S]-[ferredoxin] + ATP + H(+) = [ThiI sulfur-carrier protein]-L-cysteine + a 4-thiouridine in tRNA + 2 oxidized [2Fe-2S]-[ferredoxin] + AMP + diphosphate. The enzyme catalyses [ThiS sulfur-carrier protein]-C-terminal Gly-Gly-AMP + S-sulfanyl-L-cysteinyl-[cysteine desulfurase] + AH2 = [ThiS sulfur-carrier protein]-C-terminal-Gly-aminoethanethioate + L-cysteinyl-[cysteine desulfurase] + A + AMP + 2 H(+). Its pathway is cofactor biosynthesis; thiamine diphosphate biosynthesis. Functionally, catalyzes the ATP-dependent transfer of a sulfur to tRNA to produce 4-thiouridine in position 8 of tRNAs, which functions as a near-UV photosensor. Also catalyzes the transfer of sulfur to the sulfur carrier protein ThiS, forming ThiS-thiocarboxylate. This is a step in the synthesis of thiazole, in the thiamine biosynthesis pathway. The sulfur is donated as persulfide by IscS. The sequence is that of Probable tRNA sulfurtransferase from Oceanobacillus iheyensis (strain DSM 14371 / CIP 107618 / JCM 11309 / KCTC 3954 / HTE831).